The chain runs to 112 residues: Thioredoxin-like protein YdfQ (112 aa).

One can recognise a Thioredoxin domain in the interval 1–107 (MKEMTGLHSL…LEQKLKRVYR (107 aa)). A disulfide bond links Cys-32 and Cys-35.

In Bacillus subtilis (strain 168), this protein is Thioredoxin-like protein YdfQ (ydfQ).